The chain runs to 59 residues: Large ribosomal subunit protein uL30 (59 aa).

It belongs to the universal ribosomal protein uL30 family. As to quaternary structure, part of the 50S ribosomal subunit.

The protein is Large ribosomal subunit protein uL30 of Haemophilus ducreyi (strain 35000HP / ATCC 700724).